The primary structure comprises 203 residues: FMN-dependent NADH:quinone oxidoreductase (203 aa).

Residues S9, 15-17 (SVS), and 138-141 (SRGG) each bind FMN.

This sequence belongs to the azoreductase type 1 family. Homodimer. It depends on FMN as a cofactor.

The catalysed reaction is 2 a quinone + NADH + H(+) = 2 a 1,4-benzosemiquinone + NAD(+). The enzyme catalyses N,N-dimethyl-1,4-phenylenediamine + anthranilate + 2 NAD(+) = 2-(4-dimethylaminophenyl)diazenylbenzoate + 2 NADH + 2 H(+). In terms of biological role, quinone reductase that provides resistance to thiol-specific stress caused by electrophilic quinones. Also exhibits azoreductase activity. Catalyzes the reductive cleavage of the azo bond in aromatic azo compounds to the corresponding amines. This is FMN-dependent NADH:quinone oxidoreductase from Methylorubrum extorquens (strain CM4 / NCIMB 13688) (Methylobacterium extorquens).